Here is a 191-residue protein sequence, read N- to C-terminus: Probable calcium-binding protein CML8 (191 aa).

The tract at residues 1-41 (MASKYRGYYHDEASSAAGGGGGGGGGDGYRREKQVRKKRLT) is disordered. Residues 17-27 (AGGGGGGGGGD) are compositionally biased toward gly residues. 4 EF-hand domains span residues 43-78 (QKRKEIKEAFDLFDTDGSGTIDPKELNVAMRALGFE), 79-114 (MTPEQIHQMIAEVDKDGSGTIDFDEFVHMMTDKMGE), 116-151 (DAREELNKAFKIIDKDNNGKISDVDIQRLAIETGEP), and 152-187 (FTLDEVREMIEAADENGDGEVDHEEFLKMMKRIGFG). Residues aspartate 56, aspartate 58, serine 60, threonine 62, glutamate 67, aspartate 92, aspartate 94, serine 96, threonine 98, glutamate 103, aspartate 129, aspartate 131, asparagine 133, lysine 135, aspartate 140, aspartate 165, asparagine 167, aspartate 169, glutamate 171, and glutamate 176 each coordinate Ca(2+).

Functionally, potential calcium sensor. The protein is Probable calcium-binding protein CML8 (CML8) of Oryza sativa subsp. japonica (Rice).